The following is a 267-amino-acid chain: Ribosyldihydronicotinamide dehydrogenase-like protein traD (267 aa).

FAD-binding positions include His9, Leu15–Asn16, and Leu100–Phe103. Residue Gly122–Gly124 coordinates substrate. FAD-binding positions include Thr152–Gly155 and Tyr160.

It belongs to the NAD(P)H dehydrogenase (quinone) family. As to quaternary structure, homodimer. FAD is required as a cofactor.

It functions in the pathway secondary metabolite biosynthesis. Functionally, ribosyldihydronicotinamide dehydrogenase-like protein; part of the tra gene cluster that produces terrestric acid. The clavatol biosynthesis cluster cla and the terrestric acid cluster tra are both involved in the production of peniphenones and penilactones. The non-reducing PKS claF is responsible for the formation of clavatol from successive condensations of 3 malonyl-CoA units, presumably with a simple acetyl-CoA starter unit, and 2 methylation steps. The esterase claE probably collaborates with claF by catalyzing the hydrolysis of ACP-bound acyl intermediates to free the ACP from stalled intermediates. The clavatol oxidase claD then converts clavatol to hydroxyclavatol. Spontaneous dehydration of hydroxyclavatol leads to the accumulation of the highly active ortho-quinone methide. On the other hand, the PKS-NRPS hybrid traA is involved in the formation of crustosic acid, with the help of traB and traD. The polyketide synthase module (PKS) of traA is responsible for the synthesis of the polyketide backbone via the condensation of an acetyl-CoA starter unit with 3 malonyl-CoA units. The downstream nonribosomal peptide synthetase (NRPS) module then amidates the carboxyl end of the polyketide with L-malic acid. Because traA lacks a designated enoylreductase (ER) domain, the required activity is provided the enoyl reductase traG. Crustosic acid undergoes decarboxylation and isomerization to the terrestric acid, catalyzed by the 2-oxoglutarate-dependent dioxygenase traH. Both acids are further converted to the 2 gamma-butyrolactones (R)-5-methyltetronic acid and (S)-5-carboxylmethyltetronic acid, with involvement of the cytochrome P450 monooxygenase claJ. Spontaneous addition of the methide to these gamma-butyrolactones leads to peniphenone D and penilactone D, which undergo again stereospecific attacking by methide to give penilactones A and B. The sequence is that of Ribosyldihydronicotinamide dehydrogenase-like protein traD from Penicillium crustosum (Blue mold fungus).